The chain runs to 251 residues: DNA repair protein RecO (251 aa).

The protein belongs to the RecO family.

Involved in DNA repair and RecF pathway recombination. The protein is DNA repair protein RecO of Streptococcus mutans serotype c (strain ATCC 700610 / UA159).